A 378-amino-acid polypeptide reads, in one-letter code: MSGNTLGTLFCVTSFGESHGPAIGCVIDGCPPGLSLTAADIQGELDRRKPGTSRHVTQRREPDEVEILSGVFEGVTTGTPIALLIRNQDQRSKDYGNIAETFRPGHADYPYWQKYGIRDYRGGGRSSARETAVRVAAGAVARKWLSERYGIVIRGYMAQLGPLPIPFVSWDAVGDNPFFAPNAEIVPQLESYMDELRKSGDSVGARINVVASGVPVGWGEPVYDRLDADIAYAMMSINAVKGVEIGAGFASVAQLGTEHGDELTPEGFLSNNAGGVLGGISSGQDVLVSMAIKPTSSIRLDRRSIDREGNPVIVNTHGRHDPCVGIRATPVAEAMLALVLMDHALRHRAQCGDVRTATPQIAALAPEGVQAVPSPRAE.

Residues R48 and R54 each contribute to the NADP(+) site. FMN contacts are provided by residues 125-127, 238-239, G278, 293-297, and R319; these read RSS, NA, and KPTSS.

It belongs to the chorismate synthase family. In terms of assembly, homotetramer. The cofactor is FMNH2.

It carries out the reaction 5-O-(1-carboxyvinyl)-3-phosphoshikimate = chorismate + phosphate. It functions in the pathway metabolic intermediate biosynthesis; chorismate biosynthesis; chorismate from D-erythrose 4-phosphate and phosphoenolpyruvate: step 7/7. In terms of biological role, catalyzes the anti-1,4-elimination of the C-3 phosphate and the C-6 proR hydrogen from 5-enolpyruvylshikimate-3-phosphate (EPSP) to yield chorismate, which is the branch point compound that serves as the starting substrate for the three terminal pathways of aromatic amino acid biosynthesis. This reaction introduces a second double bond into the aromatic ring system. In Azoarcus sp. (strain BH72), this protein is Chorismate synthase.